We begin with the raw amino-acid sequence, 431 residues long: Enolase (431 aa).

A (2R)-2-phosphoglycerate-binding site is contributed by glutamine 167. The Proton donor role is filled by glutamate 209. Positions 246, 290, and 317 each coordinate Mg(2+). (2R)-2-phosphoglycerate-binding residues include lysine 342, arginine 371, serine 372, and lysine 393. The active-site Proton acceptor is the lysine 342.

Belongs to the enolase family. As to quaternary structure, component of the RNA degradosome, a multiprotein complex involved in RNA processing and mRNA degradation. The cofactor is Mg(2+).

It is found in the cytoplasm. The protein resides in the secreted. The protein localises to the cell surface. It carries out the reaction (2R)-2-phosphoglycerate = phosphoenolpyruvate + H2O. Its pathway is carbohydrate degradation; glycolysis; pyruvate from D-glyceraldehyde 3-phosphate: step 4/5. Functionally, catalyzes the reversible conversion of 2-phosphoglycerate (2-PG) into phosphoenolpyruvate (PEP). It is essential for the degradation of carbohydrates via glycolysis. The sequence is that of Enolase from Erwinia tasmaniensis (strain DSM 17950 / CFBP 7177 / CIP 109463 / NCPPB 4357 / Et1/99).